The following is a 252-amino-acid chain: MIKKRVIPCLDVKDGRVVKGIQFQSLRDIGNPVDLALYYNEAGADELVFLDISKTEAGHDLMIEVIEATAKQLFIPLTVGGGIQNLDDITQLLNHGADKISLNSSALKHPELIRQASEKFGRQCICIAIDSFYDKDRKDYFCTTHGGKKLTDVRVYDWVQEVELLGAGELLITSMHHDGMKQGFDIEHLAKIKQLVNIPIIASGGGGNAQHFVELFQQTDVSAGLAASILHDQETTVAEIKDKMREGGILVR.

Residues D11 and D130 contribute to the active site.

This sequence belongs to the HisA/HisF family. In terms of assembly, heterodimer of HisH and HisF.

It is found in the cytoplasm. It catalyses the reaction 5-[(5-phospho-1-deoxy-D-ribulos-1-ylimino)methylamino]-1-(5-phospho-beta-D-ribosyl)imidazole-4-carboxamide + L-glutamine = D-erythro-1-(imidazol-4-yl)glycerol 3-phosphate + 5-amino-1-(5-phospho-beta-D-ribosyl)imidazole-4-carboxamide + L-glutamate + H(+). It participates in amino-acid biosynthesis; L-histidine biosynthesis; L-histidine from 5-phospho-alpha-D-ribose 1-diphosphate: step 5/9. Functionally, IGPS catalyzes the conversion of PRFAR and glutamine to IGP, AICAR and glutamate. The HisF subunit catalyzes the cyclization activity that produces IGP and AICAR from PRFAR using the ammonia provided by the HisH subunit. This Staphylococcus epidermidis (strain ATCC 12228 / FDA PCI 1200) protein is Imidazole glycerol phosphate synthase subunit HisF.